The sequence spans 176 residues: Ribosome maturation factor RimM (176 aa).

One can recognise a PRC barrel domain in the interval Pro-100–Leu-172.

This sequence belongs to the RimM family. As to quaternary structure, binds ribosomal protein uS19.

It is found in the cytoplasm. Functionally, an accessory protein needed during the final step in the assembly of 30S ribosomal subunit, possibly for assembly of the head region. Essential for efficient processing of 16S rRNA. May be needed both before and after RbfA during the maturation of 16S rRNA. It has affinity for free ribosomal 30S subunits but not for 70S ribosomes. This chain is Ribosome maturation factor RimM, found in Mycobacterium bovis (strain ATCC BAA-935 / AF2122/97).